A 160-amino-acid chain; its full sequence is Transcription elongation factor GreA (160 aa).

Positions 14–38 (IKAELASLKKERPEVIKAIAEAREE) form a coiled coil.

The protein belongs to the GreA/GreB family.

Its function is as follows. Necessary for efficient RNA polymerase transcription elongation past template-encoded arresting sites. The arresting sites in DNA have the property of trapping a certain fraction of elongating RNA polymerases that pass through, resulting in locked ternary complexes. Cleavage of the nascent transcript by cleavage factors such as GreA or GreB allows the resumption of elongation from the new 3'terminus. GreA releases sequences of 2 to 3 nucleotides. This chain is Transcription elongation factor GreA, found in Maridesulfovibrio salexigens (strain ATCC 14822 / DSM 2638 / NCIMB 8403 / VKM B-1763) (Desulfovibrio salexigens).